Consider the following 962-residue polypeptide: pH-response regulator protein palF/prr-3 (962 aa).

4 disordered regions span residues 1 to 43 (MGPF…DSST), 225 to 326 (APPK…THPS), 568 to 675 (TDSN…PDEN), and 689 to 962 (RLLP…RYER). A compositionally biased stretch (basic residues) spans 237-246 (ISKRAKKKRP). Composition is skewed to polar residues over residues 297 to 307 (GFSQAPRSVSH), 314 to 326 (SGDS…THPS), and 581 to 596 (PSLT…SNYV). Composition is skewed to low complexity over residues 696–722 (PIAA…PDSS) and 738–747 (PTPAATPATA). Residues 793 to 805 (TEDKQELERRRLL) are compositionally biased toward basic and acidic residues. Residues 830–839 (AGPSGSRAGP) are compositionally biased toward low complexity. Over residues 840 to 849 (SAPPPAPPVA) the composition is skewed to pro residues. Positions 913 to 928 (PSSPVLAPASAFFPAS) are enriched in low complexity. Polar residues predominate over residues 929–949 (GSGNVHDSPREQGQQARSDSS).

This sequence belongs to the arrestin family. PalF/RIM8 subfamily.

Functionally, required for the proteolytic cleavage of the transcription factor pacc-1 in response to alkaline ambient pH. The protein is pH-response regulator protein palF/prr-3 (prr-3) of Neurospora crassa (strain ATCC 24698 / 74-OR23-1A / CBS 708.71 / DSM 1257 / FGSC 987).